Consider the following 489-residue polypeptide: Trehalose-6-phosphate synthase (489 aa).

Residue R22 participates in D-glucose 6-phosphate binding. 42 to 43 (GG) lines the UDP-alpha-D-glucose pocket. 2 residues coordinate D-glucose 6-phosphate: Y94 and D148. UDP-alpha-D-glucose-binding residues include R290 and K295. R328 provides a ligand contact to D-glucose 6-phosphate. 393 to 397 (LVAKE) serves as a coordination point for UDP-alpha-D-glucose.

This sequence belongs to the glycosyltransferase 20 family. In terms of assembly, homotetramer.

The catalysed reaction is ADP-alpha-D-glucose + D-glucose 6-phosphate = alpha,alpha-trehalose 6-phosphate + ADP + H(+). The enzyme catalyses CDP-alpha-D-glucose + D-glucose 6-phosphate = alpha,alpha-trehalose 6-phosphate + CDP + H(+). It catalyses the reaction GDP-alpha-D-glucose + D-glucose 6-phosphate = alpha,alpha-trehalose 6-phosphate + GDP + H(+). It carries out the reaction TDP-alpha-D-glucose + D-glucose 6-phosphate = 5-methyl-UDP + alpha,alpha-trehalose 6-phosphate + H(+). The catalysed reaction is D-glucose 6-phosphate + UDP-alpha-D-glucose = alpha,alpha-trehalose 6-phosphate + UDP + H(+). It participates in glycan biosynthesis; trehalose biosynthesis. Probably involved in the osmoprotection via the biosynthesis of trehalose and in the production of glycogen and alpha-glucan via the TreS-Pep2 branch involved in the biosynthesis of maltose-1-phosphate (M1P). Catalyzes the transfer of glucose from UDP-glucose (UDP-Glc) to D-glucose 6-phosphate (Glc-6-P) to form trehalose-6-phosphate. Probably also able to use ADP-Glc, CDP-Glc, GDP-Glc and TDP-Glc as glucosyl donors. This chain is Trehalose-6-phosphate synthase, found in Mycobacterium sp. (strain KMS).